The following is a 500-amino-acid chain: MSIVDVRTPDPKRFIPGATGDWEVIIGMEVHAQVLSNSKLFSGASTEFGSEPNANVSLVDAAMPGMLPVINEECVKQAVRTGLGLKAKINNRSIFDRKNYFYPDLPQGYQISQYKDPIVGEGKIIISVGPDRQGHFEDVEIGIERLHLEQDAGKSMHDQHPAMSYVDLNRSGVALMEIVSKPDLRSSDEAKAYLTKLRSILRYLGTCDGNMDEGSMRADVNVSVRRPGEAFGTRCEIKNVNSIRFVGQAIEYEARRQIAILEDGGAIDQETRLFDPGKGETRSMRSKEDAHDYRYFPDPDLLPLEFDDAFVEALKAHLPELPDDKKERFVRDLGLSVYDASVLVSEKAIADYFEAVAAGRDGKTAANWVINDLLGALNKAGKPIEGTPVSPAQLGGIIDLIKDGTISGKLAKDLFEIVWNEGGDPAQIVESRGMKQVTDTGAIEKAVDEIIAANPDQVEKAKAKPSLAGWFVGQVMKATGGKANPQAVQALVKSKLGFEE.

The protein belongs to the GatB/GatE family. GatB subfamily. Heterotrimer of A, B and C subunits.

It carries out the reaction L-glutamyl-tRNA(Gln) + L-glutamine + ATP + H2O = L-glutaminyl-tRNA(Gln) + L-glutamate + ADP + phosphate + H(+). The enzyme catalyses L-aspartyl-tRNA(Asn) + L-glutamine + ATP + H2O = L-asparaginyl-tRNA(Asn) + L-glutamate + ADP + phosphate + 2 H(+). In terms of biological role, allows the formation of correctly charged Asn-tRNA(Asn) or Gln-tRNA(Gln) through the transamidation of misacylated Asp-tRNA(Asn) or Glu-tRNA(Gln) in organisms which lack either or both of asparaginyl-tRNA or glutaminyl-tRNA synthetases. The reaction takes place in the presence of glutamine and ATP through an activated phospho-Asp-tRNA(Asn) or phospho-Glu-tRNA(Gln). This is Aspartyl/glutamyl-tRNA(Asn/Gln) amidotransferase subunit B from Sinorhizobium medicae (strain WSM419) (Ensifer medicae).